A 136-amino-acid polypeptide reads, in one-letter code: 5-hydroxyisourate hydrolase (136 aa).

Residues 1–20 (MKRYILATVIASLVAAPAMA) form the signal peptide. His31, Arg69, and Tyr133 together coordinate substrate.

The protein belongs to the transthyretin family. 5-hydroxyisourate hydrolase subfamily. Homotetramer.

It is found in the periplasm. It catalyses the reaction 5-hydroxyisourate + H2O = 5-hydroxy-2-oxo-4-ureido-2,5-dihydro-1H-imidazole-5-carboxylate + H(+). Catalyzes the hydrolysis of 5-hydroxyisourate (HIU) to 2-oxo-4-hydroxy-4-carboxy-5-ureidoimidazoline (OHCU). This is 5-hydroxyisourate hydrolase (hiuH) from Salmonella typhimurium (strain LT2 / SGSC1412 / ATCC 700720).